The chain runs to 180 residues: Dephospho-CoA kinase (180 aa).

A DPCK domain is found at 2 to 180 (VIGVTGKIGT…VMKLVWEKRE (179 aa)). 10-15 (GTGKST) contacts ATP.

It belongs to the CoaE family.

The protein localises to the cytoplasm. The enzyme catalyses 3'-dephospho-CoA + ATP = ADP + CoA + H(+). It participates in cofactor biosynthesis; coenzyme A biosynthesis; CoA from (R)-pantothenate: step 5/5. In terms of biological role, catalyzes the phosphorylation of the 3'-hydroxyl group of dephosphocoenzyme A to form coenzyme A. This chain is Dephospho-CoA kinase, found in Thermotoga maritima (strain ATCC 43589 / DSM 3109 / JCM 10099 / NBRC 100826 / MSB8).